The following is a 764-amino-acid chain: ATP-dependent DNA helicase DDM1 (764 aa).

The tract at residues 1-42 is disordered; that stretch reads MVSLRSRKVIPASEMVSDGKTEKDASGDSPTSVLNEEENCEE. The span at 17–26 shows a compositional bias: basic and acidic residues; it reads SDGKTEKDAS. Positions 62–88 form a coiled coil; that stretch reads LISEAMAQEEEQLLKLREDEEKANNAG. Residues 129-152 are disordered; that stretch reads IESESQKAEPEKTGRGRKRKAASQ. Over residues 132–142 the composition is skewed to basic and acidic residues; it reads ESQKAEPEKTG. The Nuclear localization signal 1 signature appears at 145–152; sequence RKRKAASQ. Residues 214–382 enclose the Helicase ATP-binding domain; it reads ISLWQNGLNG…WSLLNFILPD (169 aa). An ATP-binding site is contributed by 227–234; it reads DQMGLGKT. The short motif at 333-336 is the DEAH box element; it reads DEGH. A Nuclear localization signal 2 motif is present at residues 429-436; sequence LRRMKCDV. A Helicase C-terminal domain is found at 528-695; the sequence is LLERLLVRLF…STPLEEEDIL (168 aa).

The protein belongs to the SNF2/RAD54 helicase family. In terms of assembly, interacts with the MBD domains of MBD2, MBD5 and MBD6.

It is found in the nucleus. It catalyses the reaction ATP + H2O = ADP + phosphate + H(+). ATPase activity is stimulated 3-fold by DNA (both free and nucleosomal) binding. Functionally, ATP-dependent DNA helicase that plays a role in formation, organization, stability and heritability of heterochromatin and thus regulates several physiological traits. Binds to the nucleosome and promotes chromatin remodeling in an ATP-dependent manner; induces nucleosome repositioning on a short DNA fragment, and, possibly, could be guided to target sites (including silent transposable elements) by small interfering RNAs (siRNAs). Can bind both free and nucleosomal DNA. Required for the heritable maintenance of genome integrity and transcriptional gene silencing (TGS), including homology-dependent gene silencing (HDG silencing), via the maintenance of DNA methylation (mostly on cytosine, in both CpG and CpHpG sites, where H is A, T or C) and of histone methylation (e.g. chromatin methylation). May facilitate localization of MBD proteins at specific nuclear domains. Necessary for the maintenance of the genomic imprint at the MEA locus, especially for the silencing of paternally inherited MEA locus. Plays a major role in the inactivation maintenance of retrotransposons (e.g. Tar17, SINE, LINE, ATLN39, CAC1 (CACTAs), Athila elements, and mutator-like elements MULEs and TIR-MULEs) and the silencing of repeated genes and transgenes (e.g. T-DNA insertions). Required for KYP-dependent histone H3 'Lys-9' (H3K9me) methylation, deacetylation of histone H4 'Lys-16' (H4K16) and MET1-dependent DNA methylation. Involved in the chromatin organization of 5S rRNA genes (localized in the pericentromeric heterochromatin of chromosomes 3, 4, and 5) modifications during heterochromatin establishment. Prevents siRNA accumulation (siRNA are probably involved in epigenetic inheritance and in 5S rRNA genes regulation by silencing). Required during plant organogenesis and development, as well as during seed formation. This chain is ATP-dependent DNA helicase DDM1 (DDM1), found in Arabidopsis thaliana (Mouse-ear cress).